We begin with the raw amino-acid sequence, 326 residues long: Probable iron chelatin transport system permease protein HP_0889 (326 aa).

The next 10 helical transmembrane spans lie at 7–27, 64–84, 91–111, 113–133, 142–162, 164–184, 187–207, 241–261, 275–295, and 301–321; these read IALACVILAVVVLLFGGESLS, ILALLVGASLSGSGVVMQTIF, PFLLGISSGAMLGVAMAIAVV, SNIAILAFFGAILASLAVLAM, LSLVLSGVVLSAFLSALAGAI, FFVIPQKAQAIVVWLLGSLSL, YKDCLIAFIGLSLGFIPLFLL, VASALAVSVSGTIGWIGLVIP, LLLSSLLMGAFFLLLADVVAK, and DLPVGIATSVLGAPFFLWLLF.

It belongs to the binding-protein-dependent transport system permease family. FecCD subfamily.

Its subcellular location is the cell inner membrane. Part of a binding-protein-dependent transport system for an iron chelatin; probably responsible for the translocation of the substrate across the membrane. This is Probable iron chelatin transport system permease protein HP_0889 from Helicobacter pylori (strain ATCC 700392 / 26695) (Campylobacter pylori).